Here is a 99-residue protein sequence, read N- to C-terminus: Large ribosomal subunit protein uL23 (99 aa).

It belongs to the universal ribosomal protein uL23 family. As to quaternary structure, part of the 50S ribosomal subunit. Contacts protein L29, and trigger factor when it is bound to the ribosome.

One of the early assembly proteins it binds 23S rRNA. One of the proteins that surrounds the polypeptide exit tunnel on the outside of the ribosome. Forms the main docking site for trigger factor binding to the ribosome. The chain is Large ribosomal subunit protein uL23 from Leifsonia xyli subsp. xyli (strain CTCB07).